The sequence spans 512 residues: Histidine ammonia-lyase (512 aa).

A cross-link (5-imidazolinone (Ala-Gly)) is located at residues 142–144; that stretch reads ASG. Position 143 is a 2,3-didehydroalanine (Ser) (Ser-143).

This sequence belongs to the PAL/histidase family. In terms of processing, contains an active site 4-methylidene-imidazol-5-one (MIO), which is formed autocatalytically by cyclization and dehydration of residues Ala-Ser-Gly.

It is found in the cytoplasm. It carries out the reaction L-histidine = trans-urocanate + NH4(+). It functions in the pathway amino-acid degradation; L-histidine degradation into L-glutamate; N-formimidoyl-L-glutamate from L-histidine: step 1/3. This is Histidine ammonia-lyase from Bartonella tribocorum (strain CIP 105476 / IBS 506).